Consider the following 551-residue polypeptide: MSNGSIRPDEVTDILRRELGDFETEAEEYEAGTVLEAGDGIATLYGLSNAQASELVEFPEQDVEGMVLNLEEDNVGVILFGDVDAVSEGDEARRTGRIASVGVNENMLGRVIDPLGRPLDGKGPIEGEKTVLPLERKAPGVIYREPVEEPLQTGIKAIDSMIPVGRGQRELVIGDRQTGKTAVLTDTIINQKKTHQEGTDSGDPVYCVYVAVGQKDSTVAQVQRDLERNGALEHTVIVNASASMPTPLQYVAPFAGACIGEYFRDTGRDSLVCFDDLSKQAVAYRELSLLLRRPPGREAYPGDIFYLHSRLLERAAKIISDEEVATQMNGLPDALQDKVQGGGSLTALPVIETQAGDVSAYIPTNVISITDGQIYLETDLFNSGIRPAIDVGNSVSRVGGSAQIDAMKDVASTLRIDLSQYRELEAFAKFGSDLDPSTQQQLNRGERLVEILNQDQFSPVPVEEQVAIIYAAINGHLDDVPVDDIEDFEEEYLERLRLRHEDVLTEIRETEELTDAAEEVFEEVAADMADVYAEDEEEEEEDVLADEGATA.

Position 174–181 (glycine 174–threonine 181) interacts with ATP.

This sequence belongs to the ATPase alpha/beta chains family. In terms of assembly, F-type ATPases have 2 components, CF(1) - the catalytic core - and CF(0) - the membrane proton channel. CF(1) has five subunits: alpha(3), beta(3), gamma(1), delta(1), epsilon(1). CF(0) has three main subunits: a(1), b(2) and c(9-12). The alpha and beta chains form an alternating ring which encloses part of the gamma chain. CF(1) is attached to CF(0) by a central stalk formed by the gamma and epsilon chains, while a peripheral stalk is formed by the delta and b chains.

The protein resides in the cell inner membrane. The catalysed reaction is ATP + H2O + 4 H(+)(in) = ADP + phosphate + 5 H(+)(out). Produces ATP from ADP in the presence of a proton gradient across the membrane. The alpha chain is a regulatory subunit. This Salinibacter ruber (strain DSM 13855 / M31) protein is ATP synthase subunit alpha.